Reading from the N-terminus, the 358-residue chain is Serine/threonine-protein phosphatase 2A activator (358 aa).

The interval 1-20 is disordered; that stretch reads MAEGERQPPPDSSEEAPPAT. N-acetylalanine is present on Ala2. Arg183, Thr188, and Gly189 together coordinate ATP. Mg(2+)-binding residues include Gly243 and Asp249. ATP-binding residues include Pro339, Gln342, and His343.

The protein belongs to the PTPA-type PPIase family. In terms of assembly, associates with PP2A heterodimeric core enzyme PP2A(D), composed of a 36 kDa catalytic subunit (subunit C) and a 65 kDa constant regulatory subunit (PR65 or subunit A). Interacts with the catalytic subunit PPP2CA (via C-terminus). Interacts with PPP2CB. Widely expressed.

It localises to the cytoplasm. The protein resides in the nucleus. The enzyme catalyses [protein]-peptidylproline (omega=180) = [protein]-peptidylproline (omega=0). PPIases accelerate the folding of proteins. It catalyzes the cis-trans isomerization of proline imidic peptide bonds in oligopeptides. Acts as a regulatory subunit for serine/threonine-protein phosphatase 2A (PP2A). Modulates PP2A activity or substrate specificity, probably by inducing a conformational change in the catalytic subunit, a proposed direct target of the PPIase. Can reactivate inactive phosphatase PP2A-phosphatase methylesterase complexes (PP2A(i)) in presence of ATP and Mg(2+). Reversibly stimulates the variable phosphotyrosyl phosphatase activity of PP2A core heterodimer PP2A(D) in presence of ATP and Mg(2+) (in vitro). The phosphotyrosyl phosphatase activity is dependent of an ATPase activity of the PP2A(D):PPP2R4 complex. Is involved in apoptosis; the function appears to be independent from PP2A. The chain is Serine/threonine-protein phosphatase 2A activator from Homo sapiens (Human).